A 497-amino-acid chain; its full sequence is Tyrosine-protein kinase SPK-1 (497 aa).

The interval M1–P25 is disordered. In terms of domain architecture, SH3 spans P33–G94. Residues E100–M200 enclose the SH2 domain. The Protein kinase domain occupies I220–L482. Residues I226–V234 and K248 contribute to the ATP site. D342 serves as the catalytic Proton acceptor.

The protein belongs to the protein kinase superfamily. Tyr protein kinase family.

The catalysed reaction is L-tyrosyl-[protein] + ATP = O-phospho-L-tyrosyl-[protein] + ADP + H(+). The polypeptide is Tyrosine-protein kinase SPK-1 (Girardia tigrina (Planarian)).